Reading from the N-terminus, the 441-residue chain is Dihydroorotase (441 aa).

Zn(2+) contacts are provided by His-77 and His-79. Substrate is bound by residues 79-81 (HFR) and Asn-111. Residues Asp-167, His-194, and His-248 each coordinate Zn(2+). Asn-294 lines the substrate pocket. A Zn(2+)-binding site is contributed by Asp-321. The active site involves Asp-321. Substrate-binding positions include His-325 and 339 to 340 (FG).

Belongs to the metallo-dependent hydrolases superfamily. DHOase family. Class I DHOase subfamily. Zn(2+) is required as a cofactor.

The catalysed reaction is (S)-dihydroorotate + H2O = N-carbamoyl-L-aspartate + H(+). Its pathway is pyrimidine metabolism; UMP biosynthesis via de novo pathway; (S)-dihydroorotate from bicarbonate: step 3/3. Functionally, catalyzes the reversible cyclization of carbamoyl aspartate to dihydroorotate. This Wolbachia sp. subsp. Drosophila simulans (strain wRi) protein is Dihydroorotase.